The primary structure comprises 251 residues: Probable transcriptional regulatory protein AAur_2300 (251 aa).

This sequence belongs to the TACO1 family.

It is found in the cytoplasm. In Paenarthrobacter aurescens (strain TC1), this protein is Probable transcriptional regulatory protein AAur_2300.